Reading from the N-terminus, the 447-residue chain is Tubulin beta chain (447 aa).

GTP-binding residues include Q11, E69, S138, G142, T143, G144, N204, and N226. E69 contributes to the Mg(2+) binding site. A disordered region spans residues 424–447 (QYQEASVSEGEEEYDEEAPLEAEE). The segment covering 432–447 (EGEEEYDEEAPLEAEE) has biased composition (acidic residues).

It belongs to the tubulin family. In terms of assembly, dimer of alpha and beta chains. A typical microtubule is a hollow water-filled tube with an outer diameter of 25 nm and an inner diameter of 15 nM. Alpha-beta heterodimers associate head-to-tail to form protofilaments running lengthwise along the microtubule wall with the beta-tubulin subunit facing the microtubule plus end conferring a structural polarity. Microtubules usually have 13 protofilaments but different protofilament numbers can be found in some organisms and specialized cells. Mg(2+) is required as a cofactor.

Its subcellular location is the cytoplasm. It is found in the cytoskeleton. Functionally, tubulin is the major constituent of microtubules, a cylinder consisting of laterally associated linear protofilaments composed of alpha- and beta-tubulin heterodimers. Microtubules grow by the addition of GTP-tubulin dimers to the microtubule end, where a stabilizing cap forms. Below the cap, tubulin dimers are in GDP-bound state, owing to GTPase activity of alpha-tubulin. This is Tubulin beta chain (TUB1) from Cochliobolus heterostrophus (Southern corn leaf blight fungus).